We begin with the raw amino-acid sequence, 273 residues long: 4-hydroxy-tetrahydrodipicolinate reductase (273 aa).

NAD(+)-binding positions include 12-17 and E38; that span reads GAGGRM. Residue R39 participates in NADP(+) binding. NAD(+) is bound by residues 102 to 104 and 126 to 129; these read GTT and AANF. The active-site Proton donor/acceptor is the H159. Position 160 (H160) interacts with (S)-2,3,4,5-tetrahydrodipicolinate. Residue K163 is the Proton donor of the active site. 169–170 serves as a coordination point for (S)-2,3,4,5-tetrahydrodipicolinate; it reads GT.

The protein belongs to the DapB family. As to quaternary structure, homotetramer.

The protein resides in the cytoplasm. It catalyses the reaction (S)-2,3,4,5-tetrahydrodipicolinate + NAD(+) + H2O = (2S,4S)-4-hydroxy-2,3,4,5-tetrahydrodipicolinate + NADH + H(+). The catalysed reaction is (S)-2,3,4,5-tetrahydrodipicolinate + NADP(+) + H2O = (2S,4S)-4-hydroxy-2,3,4,5-tetrahydrodipicolinate + NADPH + H(+). Its pathway is amino-acid biosynthesis; L-lysine biosynthesis via DAP pathway; (S)-tetrahydrodipicolinate from L-aspartate: step 4/4. Its function is as follows. Catalyzes the conversion of 4-hydroxy-tetrahydrodipicolinate (HTPA) to tetrahydrodipicolinate. The sequence is that of 4-hydroxy-tetrahydrodipicolinate reductase from Shigella sonnei (strain Ss046).